The primary structure comprises 478 residues: Glycogen synthase (478 aa).

An ADP-alpha-D-glucose-binding site is contributed by lysine 15.

It belongs to the glycosyltransferase 1 family. Bacterial/plant glycogen synthase subfamily.

It carries out the reaction [(1-&gt;4)-alpha-D-glucosyl](n) + ADP-alpha-D-glucose = [(1-&gt;4)-alpha-D-glucosyl](n+1) + ADP + H(+). The protein operates within glycan biosynthesis; glycogen biosynthesis. In terms of biological role, synthesizes alpha-1,4-glucan chains using ADP-glucose. The chain is Glycogen synthase from Actinobacillus pleuropneumoniae serotype 5b (strain L20).